A 345-amino-acid polypeptide reads, in one-letter code: uncharacterized protein (345 aa).

The span at 1 to 13 (MSKPNTETISVNI) shows a compositional bias: polar residues. Residues 1–23 (MSKPNTETISVNIPESEGVPLPD) form a disordered region. Positions 283-316 (SLKQRTNILKKQGETLKKNVEDINKDTSNLKRHA) form a coiled coil.

It localises to the virion. This is an uncharacterized protein from Acanthamoeba polyphaga mimivirus (APMV).